We begin with the raw amino-acid sequence, 139 residues long: Nucleoside diphosphate kinase (139 aa).

K9, F57, R85, T91, R102, and N112 together coordinate ATP. Catalysis depends on H115, which acts as the Pros-phosphohistidine intermediate.

The protein belongs to the NDK family. Homotetramer. Mg(2+) serves as cofactor.

It localises to the cytoplasm. It catalyses the reaction a 2'-deoxyribonucleoside 5'-diphosphate + ATP = a 2'-deoxyribonucleoside 5'-triphosphate + ADP. It carries out the reaction a ribonucleoside 5'-diphosphate + ATP = a ribonucleoside 5'-triphosphate + ADP. Its function is as follows. Major role in the synthesis of nucleoside triphosphates other than ATP. The ATP gamma phosphate is transferred to the NDP beta phosphate via a ping-pong mechanism, using a phosphorylated active-site intermediate. The chain is Nucleoside diphosphate kinase from Neorickettsia sennetsu (strain ATCC VR-367 / Miyayama) (Ehrlichia sennetsu).